Reading from the N-terminus, the 163-residue chain is MNEMSLAELWVAVAFLLFVGILIYVGAHRAIGSALDSRGQRIAAELEEARRLKEEAQKLVAEFKRKQREAEAEAESIVTAAKAEAERLASEAKAKLEDFVTRRTKMAEDKIAQAELQAVADVKAIAADAAAKAAEVLLGSAARGDVGDRLISNAIGEVKTKLN.

The helical transmembrane segment at 6–26 threads the bilayer; the sequence is LAELWVAVAFLLFVGILIYVG.

The protein belongs to the ATPase B chain family. In terms of assembly, F-type ATPases have 2 components, F(1) - the catalytic core - and F(0) - the membrane proton channel. F(1) has five subunits: alpha(3), beta(3), gamma(1), delta(1), epsilon(1). F(0) has three main subunits: a(1), b(2) and c(10-14). The alpha and beta chains form an alternating ring which encloses part of the gamma chain. F(1) is attached to F(0) by a central stalk formed by the gamma and epsilon chains, while a peripheral stalk is formed by the delta and b chains.

The protein resides in the cell inner membrane. F(1)F(0) ATP synthase produces ATP from ADP in the presence of a proton or sodium gradient. F-type ATPases consist of two structural domains, F(1) containing the extramembraneous catalytic core and F(0) containing the membrane proton channel, linked together by a central stalk and a peripheral stalk. During catalysis, ATP synthesis in the catalytic domain of F(1) is coupled via a rotary mechanism of the central stalk subunits to proton translocation. In terms of biological role, component of the F(0) channel, it forms part of the peripheral stalk, linking F(1) to F(0). The chain is ATP synthase subunit b 1 from Xanthobacter autotrophicus (strain ATCC BAA-1158 / Py2).